Consider the following 660-residue polypeptide: DNA ligase (660 aa).

Residues 31-35, 79-80, and Glu111 each bind NAD(+); these read DKEYD and SL. Lys113 acts as the N6-AMP-lysine intermediate in catalysis. NAD(+) contacts are provided by Arg134, Glu168, Lys280, and Lys304. Zn(2+) contacts are provided by Cys397, Cys400, Cys413, and Cys419. Residues 577–660 enclose the BRCT domain; that stretch reads RQESIFSGKT…LDEAAFEALL (84 aa).

Belongs to the NAD-dependent DNA ligase family. LigA subfamily. It depends on Mg(2+) as a cofactor. Mn(2+) is required as a cofactor.

The catalysed reaction is NAD(+) + (deoxyribonucleotide)n-3'-hydroxyl + 5'-phospho-(deoxyribonucleotide)m = (deoxyribonucleotide)n+m + AMP + beta-nicotinamide D-nucleotide.. Functionally, DNA ligase that catalyzes the formation of phosphodiester linkages between 5'-phosphoryl and 3'-hydroxyl groups in double-stranded DNA using NAD as a coenzyme and as the energy source for the reaction. It is essential for DNA replication and repair of damaged DNA. The sequence is that of DNA ligase from Alkaliphilus metalliredigens (strain QYMF).